Reading from the N-terminus, the 317-residue chain is Beta-ketoacyl-[acyl-carrier-protein] synthase III (317 aa).

Catalysis depends on residues Cys-112 and His-244. Residues 245–249 (QANLR) form an ACP-binding region. Asn-274 is an active-site residue.

This sequence belongs to the thiolase-like superfamily. FabH family. As to quaternary structure, homodimer.

It is found in the cytoplasm. It carries out the reaction malonyl-[ACP] + acetyl-CoA + H(+) = 3-oxobutanoyl-[ACP] + CO2 + CoA. It participates in lipid metabolism; fatty acid biosynthesis. Catalyzes the condensation reaction of fatty acid synthesis by the addition to an acyl acceptor of two carbons from malonyl-ACP. Catalyzes the first condensation reaction which initiates fatty acid synthesis and may therefore play a role in governing the total rate of fatty acid production. Possesses both acetoacetyl-ACP synthase and acetyl transacylase activities. Its substrate specificity determines the biosynthesis of branched-chain and/or straight-chain of fatty acids. The sequence is that of Beta-ketoacyl-[acyl-carrier-protein] synthase III from Pectobacterium atrosepticum (strain SCRI 1043 / ATCC BAA-672) (Erwinia carotovora subsp. atroseptica).